The following is a 763-amino-acid chain: Phosphoglycerol transferase I (763 aa).

4 helical membrane passes run 1 to 21 (MSELLSVALFLASVLIYAWKA), 26 to 46 (WWFAATLTVLGLFVILNITLY), 77 to 97 (ILPGIGIALALVAVFGALGWV), and 108 to 128 (VGYSLLALLLALGSVDASPAF).

This sequence belongs to the OpgB family.

It is found in the cell inner membrane. The catalysed reaction is a phosphatidylglycerol + a membrane-derived-oligosaccharide D-glucose = a 1,2-diacyl-sn-glycerol + a membrane-derived-oligosaccharide 6-(glycerophospho)-D-glucose.. It participates in glycan metabolism; osmoregulated periplasmic glucan (OPG) biosynthesis. Transfers a phosphoglycerol residue from phosphatidylglycerol to the membrane-bound nascent glucan backbones. This chain is Phosphoglycerol transferase I, found in Salmonella schwarzengrund (strain CVM19633).